We begin with the raw amino-acid sequence, 584 residues long: Protein FAM117B (584 aa).

Residues 1–214 (MSQRVRRNGS…SSSSSIIRRT (214 aa)) are disordered. Position 10 is a phosphoserine (Ser10). The span at 53-79 (TRGGGGGGNNGGNGGASGPSGGGGSGG) shows a compositional bias: gly residues. Residues 80–90 (PRTASRSTSPT) are compositionally biased toward low complexity. Ser102 is modified (phosphoserine). Low complexity predominate over residues 114 to 132 (TSTRGTSPTRGTAPGARSS). Positions 133-142 (PPRPQPPPPL) are enriched in pro residues. The segment covering 145–154 (TVSSPSSSPT) has biased composition (polar residues). A compositionally biased stretch (low complexity) spans 204–214 (SSSSSSIIRRT). Phosphoserine is present on residues Ser206, Ser215, Ser216, and Ser268. Disordered stretches follow at residues 227 to 461 (GHWP…SYMF) and 551 to 584 (STNT…EAEG). The span at 287–297 (RSKHSSRHHRD) shows a compositional bias: basic residues. Residue Ser340 is modified to Phosphoserine. Over residues 350–361 (IIIKETGEKEEQ) the composition is skewed to basic and acidic residues. The span at 379–392 (QRSSSTRSIDTQTP) shows a compositional bias: polar residues. Ser386 carries the post-translational modification Phosphoserine. Over residues 399-412 (SNNSSRSQSVSPTS) the composition is skewed to low complexity. Ser444 and Ser452 each carry phosphoserine.

This is Protein FAM117B (Fam117b) from Mus musculus (Mouse).